The chain runs to 571 residues: Exodeoxyribonuclease 1 (571 aa).

Residues 1–96 (MGIKGLLGLL…STEQKRKERR (96 aa)) form an N-domain region. Mg(2+) is bound by residues aspartate 30, aspartate 78, glutamate 150, aspartate 152, aspartate 171, aspartate 173, and aspartate 225. Positions 114-245 (QAIMQFSRCV…KTALRYLQKY (132 aa)) are I-domain. Disordered stretches follow at residues 464–489 (KEIDEQVPSQSNNTTPTSAKSDSASP) and 530–559 (RKNHASLPSRRIVYKPPSSPSTPISMNPRP). Positions 470 to 489 (VPSQSNNTTPTSAKSDSASP) are enriched in polar residues.

It belongs to the XPG/RAD2 endonuclease family. EXO1 subfamily. As to quaternary structure, monomer. Mg(2+) is required as a cofactor.

The protein resides in the nucleus. Its function is as follows. 5'-&gt;3' double-stranded DNA exonuclease that could act in a pathway that corrects mismatched base pairs. This is Exodeoxyribonuclease 1 (exo1) from Schizosaccharomyces pombe (strain 972 / ATCC 24843) (Fission yeast).